A 396-amino-acid chain; its full sequence is Elongation factor Tu (396 aa).

The tr-type G domain maps to 11–205; it reads KPHVNIGTIG…TIDEYIPTPV (195 aa). The G1 stretch occupies residues 20 to 27; it reads GHVDHGKT. 20 to 27 contacts GTP; it reads GHVDHGKT. A Mg(2+)-binding site is contributed by Thr-27. The segment at 61–65 is G2; sequence GITIN. The interval 82–85 is G3; the sequence is DAPG. Residues 82–86 and 137–140 contribute to the GTP site; these read DAPGH and NKTD. The interval 137 to 140 is G4; sequence NKTD. Residues 175–177 are G5; sequence SAL.

This sequence belongs to the TRAFAC class translation factor GTPase superfamily. Classic translation factor GTPase family. EF-Tu/EF-1A subfamily. In terms of assembly, monomer.

The protein resides in the cytoplasm. The catalysed reaction is GTP + H2O = GDP + phosphate + H(+). Functionally, GTP hydrolase that promotes the GTP-dependent binding of aminoacyl-tRNA to the A-site of ribosomes during protein biosynthesis. In Lacticaseibacillus casei (strain BL23) (Lactobacillus casei), this protein is Elongation factor Tu.